A 492-amino-acid chain; its full sequence is Propanoyl-CoA:succinate CoA transferase (492 aa).

260 to 264 (GVGNI) serves as a coordination point for CoA. Glu286 functions as the 5-glutamyl coenzyme A thioester intermediate in the catalytic mechanism. Asn376 and Gly380 together coordinate CoA.

It belongs to the acetyl-CoA hydrolase/transferase family.

It carries out the reaction propanoyl-CoA + succinate = propanoate + succinyl-CoA. Its function is as follows. Catalyzes the transfer of coenzyme A from propionyl-CoA to succinate. Could be part of a pathway that converts succinate to propionate. The polypeptide is Propanoyl-CoA:succinate CoA transferase (Escherichia coli (strain K12)).